Here is a 529-residue protein sequence, read N- to C-terminus: Bifunctional purine biosynthesis protein PurH (529 aa).

Residues 2-149 enclose the MGS-like domain; that stretch reads TNLVPVGRAL…KNHRFVNVVT (148 aa).

The protein belongs to the PurH family.

It catalyses the reaction (6R)-10-formyltetrahydrofolate + 5-amino-1-(5-phospho-beta-D-ribosyl)imidazole-4-carboxamide = 5-formamido-1-(5-phospho-D-ribosyl)imidazole-4-carboxamide + (6S)-5,6,7,8-tetrahydrofolate. It carries out the reaction IMP + H2O = 5-formamido-1-(5-phospho-D-ribosyl)imidazole-4-carboxamide. The protein operates within purine metabolism; IMP biosynthesis via de novo pathway; 5-formamido-1-(5-phospho-D-ribosyl)imidazole-4-carboxamide from 5-amino-1-(5-phospho-D-ribosyl)imidazole-4-carboxamide (10-formyl THF route): step 1/1. It participates in purine metabolism; IMP biosynthesis via de novo pathway; IMP from 5-formamido-1-(5-phospho-D-ribosyl)imidazole-4-carboxamide: step 1/1. The sequence is that of Bifunctional purine biosynthesis protein PurH from Cereibacter sphaeroides (strain ATCC 17025 / ATH 2.4.3) (Rhodobacter sphaeroides).